The sequence spans 284 residues: RNA polymerase sigma factor RpoH (284 aa).

Residues 53–122 (LILSHLRFVV…IHEYVLRNWR (70 aa)) form a sigma-70 factor domain-2 region. The Interaction with polymerase core subunit RpoC motif lies at 77 to 80 (DLIQ). Residues 228 to 280 (AMQGLDERSQDIIRARWLDEDNKSTLQELADRYGVSAERVRQLEKNAMKKLRA) form a sigma-70 factor domain-4 region. Residues 253–272 (LQELADRYGVSAERVRQLEK) constitute a DNA-binding region (H-T-H motif).

It belongs to the sigma-70 factor family. RpoH subfamily. Interacts with the RNA polymerase core enzyme.

The protein localises to the cytoplasm. In terms of biological role, sigma factors are initiation factors that promote the attachment of RNA polymerase to specific initiation sites and are then released. This sigma factor is involved in regulation of expression of heat shock genes. The protein is RNA polymerase sigma factor RpoH of Escherichia coli O6:H1 (strain CFT073 / ATCC 700928 / UPEC).